The sequence spans 882 residues: DNA mismatch repair protein MutS (882 aa).

629–636 lines the ATP pocket; the sequence is GPNMGGKS.

The protein belongs to the DNA mismatch repair MutS family.

Its function is as follows. This protein is involved in the repair of mismatches in DNA. It is possible that it carries out the mismatch recognition step. This protein has a weak ATPase activity. This chain is DNA mismatch repair protein MutS, found in Ralstonia pickettii (strain 12J).